A 393-amino-acid chain; its full sequence is Cytotoxic and regulatory T-cell molecule (393 aa).

The first 17 residues, 1 to 17 (MWWRVLSLLAWFPLQEA), serve as a signal peptide directing secretion. Positions 18–114 (SLTNHTETIT…VSTKEVKVIV (97 aa)) constitute an Ig-like V-type domain. The Extracellular portion of the chain corresponds to 18–287 (SLTNHTETIT…YLGLARKKSG (270 aa)). N-linked (GlcNAc...) asparagine glycosylation is found at Asn-21, Asn-87, and Asn-178. Disulfide bonds link Cys-38–Cys-98 and Cys-141–Cys-196. The Ig-like C2-type domain occupies 118 to 210 (PFKPILEASV…RGLQGRKLVA (93 aa)). The segment at 225–273 (SDALERNSLSSQDPQQPTSTVSVTEDSSTSEIDKEEKEQTTQDPDLTTE) is disordered. Over residues 231-241 (NSLSSQDPQQP) the composition is skewed to polar residues. Residues 242 to 254 (TSTVSVTEDSSTS) are compositionally biased toward low complexity. Over residues 255–264 (EIDKEEKEQT) the composition is skewed to basic and acidic residues. The helical transmembrane segment at 288-308 (ILLLTLVSFLIFILFIIVQLF) threads the bilayer. Topologically, residues 309–393 (IMKLRKAHVI…KHIQVPESIV (85 aa)) are cytoplasmic. 2 stretches are compositionally biased toward basic and acidic residues: residues 328–348 (HTLE…EEKN) and 374–387 (ENVQ…KHIQ). 2 disordered regions span residues 328 to 354 (HTLE…SSHP) and 374 to 393 (ENVQ…ESIV). Residues 390 to 393 (ESIV) carry the PDZ-binding motif.

Belongs to the nectin family. In terms of assembly, monomer. May form homodimer (via Ig-like V-type domain). Interacts (via Ig-like V-type domain) with CADM1 (via Ig-like V-type domain); the interaction competes with CRTAM homodimerization and CADM1 homodimerization. Interacts (via PDZ-binding motif) with SCRIB (via PDZ domain 3); the interaction promotes CRTAM and SCRIB polarization in a subset of CD4+ T-cells. As to expression, in the immune system, expression is restricted to activated class-I MHC-restricted cells, including NKT and CD8 T-cells. Strongly expressed in spleen, thymus, small intestine, peripheral blood leukocyte, and in Purkinje neurons in cerebellum. Expressed at much lower levels in testis, ovary, colon, lung and lymphoid tissues.

It localises to the cell membrane. Mediates heterophilic cell-cell adhesion which regulates the activation, differentiation and tissue retention of various T-cell subsets. Interaction with CADM1 promotes natural killer (NK) cell cytotoxicity and IFNG/interferon-gamma secretion by CD8+ T-cells in vitro as well as NK cell-mediated rejection of tumors expressing CADM1 in vivo. Regulates CD8+ T-cell proliferation in response to T-cell receptor (TCR) activation. Appears to be dispensable for CD8+ T-cell-mediated cytotoxicity. Interaction with SCRIB promotes the late phase of cellular polarization of a subset of CD4+ T-cells, which in turn regulates TCR-mediated proliferation and IFNG, IL17 and IL22 production. By interacting with CADM1 on CD8+ dendritic cells, regulates the retention of activated CD8+ T-cells within the draining lymph node. Required for the intestinal retention of intraepithelial CD4+ CD8+ T-cells and, to a lesser extent, intraepithelial and lamina propria CD8+ T-cells and CD4+ T-cells. Interaction with CADM1 promotes the adhesion to gut-associated CD103+ dendritic cells, which may facilitate the expression of gut-homing and adhesion molecules on T-cells and the conversion of CD4+ T-cells into CD4+ CD8+ T-cells. This chain is Cytotoxic and regulatory T-cell molecule, found in Homo sapiens (Human).